A 733-amino-acid polypeptide reads, in one-letter code: Wall-associated receptor kinase 5 (733 aa).

A signal peptide spans 1–23 (MKVHSLFLMAIFFYLAYTQLVKA). Topologically, residues 24–330 (QPRDDCQTRC…IDTPKEEPKY (307 aa)) are extracellular. Asn-57, Asn-77, Asn-110, Asn-137, Asn-184, Asn-206, Asn-218, Asn-232, and Asn-247 each carry an N-linked (GlcNAc...) asparagine glycan. Residues 231–278 (GNQTCEQVVGRNICGGNSTCFDSTRGKGYNCKCLQGFDGNPYLSDGCQ) form the EGF-like 1 domain. Disulfide bonds link Cys-235–Cys-250, Cys-244–Cys-261, Cys-263–Cys-277, Cys-283–Cys-296, Cys-290–Cys-305, and Cys-307–Cys-320. Residues 279-321 (DINECTTRIHNCSDTSTCENTLGSFHCQCPSGSDLNTTTMSCI) form the EGF-like 2; calcium-binding domain. Asn-289 carries N-linked (GlcNAc...) asparagine glycosylation. N-linked (GlcNAc...) asparagine glycosylation is present at Asn-314. A helical membrane pass occupies residues 331–351 (LGWTTVLLGTTIGFLIILLTI). At 352–733 (SYIQQKMRHR…VTRLDIETGR (382 aa)) the chain is on the cytoplasmic side. Thr-397 carries the post-translational modification Phosphothreonine. In terms of domain architecture, Protein kinase spans 408 to 691 (YNESRILGQG…RVKTTKHQWS (284 aa)). ATP contacts are provided by residues 414–422 (LGQGGQGTV) and Lys-436. Residue Tyr-481 is modified to Phosphotyrosine. Residue Asp-533 is the Proton acceptor of the active site. Residues Thr-567 and Thr-572 each carry the phosphothreonine modification. The residue at position 580 (Tyr-580) is a Phosphotyrosine.

This sequence belongs to the protein kinase superfamily. Ser/Thr protein kinase family. As to expression, predominantly expressed in green tissues such as stems and leaves.

Its subcellular location is the membrane. The enzyme catalyses L-seryl-[protein] + ATP = O-phospho-L-seryl-[protein] + ADP + H(+). The catalysed reaction is L-threonyl-[protein] + ATP = O-phospho-L-threonyl-[protein] + ADP + H(+). Its function is as follows. Serine/threonine-protein kinase that may function as a signaling receptor of extracellular matrix component. Binding to pectin may have significance in the control of cell expansion, morphogenesis and development. The sequence is that of Wall-associated receptor kinase 5 (WAK5) from Arabidopsis thaliana (Mouse-ear cress).